Reading from the N-terminus, the 97-residue chain is Mitochondrial import inner membrane translocase subunit Tim8 A (97 aa).

Positions 43–66 (CWEKCMDKPGPKLDSRAEACFVNC) match the Twin CX3C motif motif. Disulfide bonds link Cys-43–Cys-66 and Cys-47–Cys-62. Ser-57, Ser-87, Ser-94, and Ser-96 each carry phosphoserine.

This sequence belongs to the small Tim family. As to quaternary structure, heterohexamer; composed of 3 copies of TIMM8A and 3 copies of TIMM13, named soluble 70 kDa complex. Associates with the TIM22 complex, whose core is composed of TIMM22.

The protein resides in the mitochondrion inner membrane. Functionally, mitochondrial intermembrane chaperone that participates in the import and insertion of some multi-pass transmembrane proteins into the mitochondrial inner membrane. Also required for the transfer of beta-barrel precursors from the TOM complex to the sorting and assembly machinery (SAM complex) of the outer membrane. Acts as a chaperone-like protein that protects the hydrophobic precursors from aggregation and guide them through the mitochondrial intermembrane space. The TIMM8-TIMM13 complex mediates the import of proteins such as TIMM23, SLC25A12/ARALAR1 and SLC25A13/ARALAR2, while the predominant TIMM9-TIMM10 70 kDa complex mediates the import of much more proteins. This Bos taurus (Bovine) protein is Mitochondrial import inner membrane translocase subunit Tim8 A (TIMM8A).